The following is a 298-amino-acid chain: Probable tRNA(His) guanylyltransferase (298 aa).

Residues Asp-58, Gly-59, and Asp-105 each contribute to the Mg(2+) site. GTP is bound by residues 58 to 63 and 104 to 105; these read DGRNFH and SD.

It belongs to the tRNA(His) guanylyltransferase family. Homotetramer. Interacts with MFN1 and MFN2; functions as a guanyl-nucleotide exchange factor/GEF for MFN2 and also probably MFN1. It depends on Mg(2+) as a cofactor.

The protein localises to the cytoplasm. It localises to the mitochondrion. The enzyme catalyses a 5'-end ribonucleotide-tRNA(His) + GTP + ATP + H2O = a 5'-end phospho-guanosine-ribonucleotide-tRNA(His) + AMP + 2 diphosphate + H(+). In terms of biological role, adds a GMP to the 5'-end of tRNA(His) after transcription and RNase P cleavage. This step is essential for proper recognition of the tRNA and for the fidelity of protein synthesis. Also functions as a guanyl-nucleotide exchange factor/GEF for the MFN1 and MFN2 mitofusins thereby regulating mitochondrial fusion. By regulating both mitochondrial dynamics and bioenergetic function, it contributes to cell survival following oxidative stress. In Mus musculus (Mouse), this protein is Probable tRNA(His) guanylyltransferase (Thg1l).